The sequence spans 445 residues: Maltoporin 2 (445 aa).

The first 25 residues, 1–25 (MKMKAKWLPIAAAVTAALASQAAFA), serve as a signal peptide directing secretion.

Belongs to the porin LamB (TC 1.B.3) family. Homotrimer formed of three 18-stranded antiparallel beta-barrels, containing three independent channels.

The protein localises to the cell outer membrane. It carries out the reaction beta-maltose(in) = beta-maltose(out). Its function is as follows. Involved in the transport of maltose and maltodextrins. This chain is Maltoporin 2, found in Aeromonas salmonicida (strain A449).